Reading from the N-terminus, the 116-residue chain is Type IV narrow pilus major component PilA5 (116 aa).

A propeptide spans 1–5 (leader sequence); that stretch reads MRAKG. At Phe6 the chain carries N-methylphenylalanine. The chain crosses the membrane as a helical span at residues 6–26; that stretch reads FTLIELAIVIVIIGILVAIAV.

Glycosylated.

The protein resides in the cell inner membrane. The protein localises to the cell outer membrane. It is found in the periplasm. Its function is as follows. Plays an essential role in forming the main structure of the narrow T4P pili that participates in twitching motility. This is Type IV narrow pilus major component PilA5 (pilA5) from Thermus thermophilus (strain ATCC BAA-163 / DSM 7039 / HB27).